The sequence spans 869 residues: Valine--tRNA ligase (869 aa).

Positions 47–57 match the 'HIGH' region motif; the sequence is PYPTGNFHIGN. Residues 521–525 carry the 'KMSKS' region motif; sequence KMSKS. Position 524 (Lys-524) interacts with ATP.

The protein belongs to the class-I aminoacyl-tRNA synthetase family. ValS type 2 subfamily.

It is found in the cytoplasm. The catalysed reaction is tRNA(Val) + L-valine + ATP = L-valyl-tRNA(Val) + AMP + diphosphate. In terms of biological role, catalyzes the attachment of valine to tRNA(Val). As ValRS can inadvertently accommodate and process structurally similar amino acids such as threonine, to avoid such errors, it has a 'posttransfer' editing activity that hydrolyzes mischarged Thr-tRNA(Val) in a tRNA-dependent manner. The sequence is that of Valine--tRNA ligase from Methanosarcina acetivorans (strain ATCC 35395 / DSM 2834 / JCM 12185 / C2A).